Reading from the N-terminus, the 287-residue chain is Large ribosomal subunit protein uL2 (287 aa).

Basic residues-rich tracts occupy residues 209 to 220 (GRNRWKARRPKV) and 258 to 287 (KTRKKKKQSNKLIVRRRRRSSKRSRGGRQS). The interval 209-287 (GRNRWKARRP…SKRSRGGRQS (79 aa)) is disordered.

This sequence belongs to the universal ribosomal protein uL2 family. In terms of assembly, part of the 50S ribosomal subunit. Forms a bridge to the 30S subunit in the 70S ribosome.

Functionally, one of the primary rRNA binding proteins. Required for association of the 30S and 50S subunits to form the 70S ribosome, for tRNA binding and peptide bond formation. It has been suggested to have peptidyltransferase activity; this is somewhat controversial. Makes several contacts with the 16S rRNA in the 70S ribosome. This is Large ribosomal subunit protein uL2 from Acaryochloris marina (strain MBIC 11017).